The following is a 483-amino-acid chain: Proline--tRNA ligase (483 aa).

It belongs to the class-II aminoacyl-tRNA synthetase family. ProS type 3 subfamily. Homodimer.

The protein localises to the cytoplasm. It catalyses the reaction tRNA(Pro) + L-proline + ATP = L-prolyl-tRNA(Pro) + AMP + diphosphate. Functionally, catalyzes the attachment of proline to tRNA(Pro) in a two-step reaction: proline is first activated by ATP to form Pro-AMP and then transferred to the acceptor end of tRNA(Pro). The protein is Proline--tRNA ligase of Sulfolobus acidocaldarius (strain ATCC 33909 / DSM 639 / JCM 8929 / NBRC 15157 / NCIMB 11770).